Reading from the N-terminus, the 366-residue chain is tRNA/tmRNA (uracil-C(5))-methyltransferase (366 aa).

S-adenosyl-L-methionine is bound by residues Gln-190, Tyr-218, Asn-223, Glu-239, and Asp-299. The active-site Nucleophile is Cys-324. Catalysis depends on Glu-358, which acts as the Proton acceptor.

This sequence belongs to the class I-like SAM-binding methyltransferase superfamily. RNA M5U methyltransferase family. TrmA subfamily.

It catalyses the reaction uridine(54) in tRNA + S-adenosyl-L-methionine = 5-methyluridine(54) in tRNA + S-adenosyl-L-homocysteine + H(+). The catalysed reaction is uridine(341) in tmRNA + S-adenosyl-L-methionine = 5-methyluridine(341) in tmRNA + S-adenosyl-L-homocysteine + H(+). In terms of biological role, dual-specificity methyltransferase that catalyzes the formation of 5-methyluridine at position 54 (m5U54) in all tRNAs, and that of position 341 (m5U341) in tmRNA (transfer-mRNA). This Salmonella paratyphi A (strain ATCC 9150 / SARB42) protein is tRNA/tmRNA (uracil-C(5))-methyltransferase.